The following is a 73-amino-acid chain: UPF0154 protein MG335.1 homolog (73 aa).

Residues 6-26 form a helical membrane-spanning segment; sequence LALGLGIPLSLLVGVIIGYFI.

This sequence belongs to the UPF0154 family.

It is found in the membrane. The protein is UPF0154 protein MG335.1 homolog of Mycoplasma pneumoniae (strain ATCC 29342 / M129 / Subtype 1) (Mycoplasmoides pneumoniae).